The following is an 83-amino-acid chain: Kunitz-type serine protease inhibitor textilinin-4 (83 aa).

An N-terminal signal peptide occupies residues 1–24 (MSSGGLLLLLGLLTLWEVLTPVSS). The 51-residue stretch at 31-81 (CELPADTGSCKGNVPRFYYNADHHQCLKFIYGGCGGNANNFKTIEECKSTC) folds into the BPTI/Kunitz inhibitor domain. 3 disulfides stabilise this stretch: Cys-31–Cys-81, Cys-40–Cys-64, and Cys-56–Cys-77.

It belongs to the venom Kunitz-type family. Expressed by the venom gland.

The protein localises to the secreted. Serine protease inhibitor. Does not inhibit plasmin, and does not reduce blood loss in the mouse tail vein blood loss model. This Pseudonaja textilis textilis (Eastern brown snake) protein is Kunitz-type serine protease inhibitor textilinin-4.